The following is a 55-amino-acid chain: Large ribosomal subunit protein bL33 (55 aa).

It belongs to the bacterial ribosomal protein bL33 family.

The chain is Large ribosomal subunit protein bL33 from Pectobacterium carotovorum subsp. carotovorum (strain PC1).